A 634-amino-acid polypeptide reads, in one-letter code: Chaperone protein HtpG (634 aa).

The a; substrate-binding stretch occupies residues 1–344 (MSETVSQNKE…SNDLPLNVSR (344 aa)). Positions 345-561 (EILQDNKVTQ…DYEMGTQMAK (217 aa)) are b. The interval 562 to 634 (LLAAAGQAVP…GAINKLLTKV (73 aa)) is c.

The protein belongs to the heat shock protein 90 family. Homodimer.

The protein resides in the cytoplasm. Molecular chaperone. Has ATPase activity. This chain is Chaperone protein HtpG, found in Vibrio parahaemolyticus serotype O3:K6 (strain RIMD 2210633).